A 380-amino-acid polypeptide reads, in one-letter code: Transcription factor RF2a (380 aa).

A disordered region spans residues 1 to 57 (MNREKSPIPGDGGDGLPPQATRRAGPPAAAAAAEYDISRMPDFPTRNPGHRRAHSEI). Residues 16–33 (LPPQATRRAGPPAAAAAA) show a composition bias toward low complexity. Residues 56–108 (EILSLPEDLDLCAAGGGDGPSLSDENDEELFSMFLDVEKLNSTCGASSEAEAE) form an activation of RTBV promoter region. The bZIP domain occupies 181 to 244 (DPKRAKRIWA…SGLTTENSEL (64 aa)). Residues 183–204 (KRAKRIWANRQSAARSKERKMR) are basic motif. Residues 209 to 244 (LERKVQTLQTEATTLSAQLALLQRDTSGLTTENSEL) are leucine-zipper. The tract at residues 283 to 357 (GGMMMNFGGM…AQQLQQAARD (75 aa)) is interaction with TBP2. Low complexity predominate over residues 326 to 355 (QAQQQQVLHPQHQQQQPLHPLQAQQLQQAA). The disordered stretch occupies residues 326–380 (QAQQQQVLHPQHQQQQPLHPLQAQQLQQAARDLKMKSPMGGQSQWGDGKSGSSGN).

This sequence belongs to the bZIP family. As to quaternary structure, binds DNA as a homodimer or as a heterodimer with RF2b. The heterodimer binds stronger to DNA than the homodimer. Interacts with TBP2. As to expression, expressed at high levels in levels in leaf sheath, moderate levels in leaf blade, but not in roots. Predominantly expressed in vascular tissues.

The protein resides in the nucleus. Transcription factor probably involved in vascular development and shoot tissue organization. Binds to the DNA sequence 5'-CCGAGTGTGCCCCTGG-3' present in the promoter region Box II of the phloem-specific rice tungro bacilliform virus (RTBV) promoter. May regulate tissue-specific expression of the RTBV promoter and virus replication. This Oryza sativa subsp. japonica (Rice) protein is Transcription factor RF2a (RF2a).